We begin with the raw amino-acid sequence, 281 residues long: Large ribosomal subunit protein uL22 (281 aa).

Residues 1 to 225 (MASPMGSTAS…KAGGAAEAEV (225 aa)) are large ribosomal subunit protein uL22. Disordered stretches follow at residues 137–175 (RATK…PVAA) and 199–281 (AVAS…GGTR). The segment covering 139–153 (TKKAVPKGARHRRRL) has biased composition (basic residues). Low complexity-rich tracts occupy residues 159-175 (PAAS…PVAA) and 199-239 (AVAS…APAA). The unknown stretch occupies residues 226-281 (ATTDEQTTETAPAAEAEKPAVRRPAARKSTTSARRRAAETEGHDSDAESTDEGGTR). Over residues 261 to 271 (RAAETEGHDSD) the composition is skewed to basic and acidic residues. The span at 272–281 (AESTDEGGTR) shows a compositional bias: acidic residues.

The protein belongs to the universal ribosomal protein uL22 family. Part of the 50S ribosomal subunit.

In terms of biological role, the globular domain of the protein is located near the polypeptide exit tunnel on the outside of the subunit, while an extended beta-hairpin is found that lines the wall of the exit tunnel in the center of the 70S ribosome. This protein binds specifically to 23S rRNA; its binding is stimulated by other ribosomal proteins, e.g. L4, L17, and L20. It is important during the early stages of 50S assembly. It makes multiple contacts with different domains of the 23S rRNA in the assembled 50S subunit and ribosome. The sequence is that of Large ribosomal subunit protein uL22 from Acidothermus cellulolyticus (strain ATCC 43068 / DSM 8971 / 11B).